Reading from the N-terminus, the 84-residue chain is Large ribosomal subunit protein bL27 (84 aa).

The tract at residues 1-24 (MAHKKGGGSSKNGRDSNSQRLGVK) is disordered.

This sequence belongs to the bacterial ribosomal protein bL27 family.

In Leptospira borgpetersenii serovar Hardjo-bovis (strain JB197), this protein is Large ribosomal subunit protein bL27.